The primary structure comprises 449 residues: MITLKQAMELAPQALSEIKTEIRKKVSESSLNAYVGEIRDSLEGGIPILVKDNINVKGSELTCGSKILEGYVAPYNATVIEKLHAQGMSAFGRSNMDEFAMGSTTESSAHGKTLNPVDSSRVPGGSSGGSASAVAGGLAIAALGSDTGGSIRQPAAFCGCVGLKPTYGRVSRYGLVAYASSLDQIGPITQNVEDAAILFDAISGHDGRDSTSASLAPTQTHKALDANKKQTIAILPDLLKEASKPIQEAYFETVKILESEGHKIVEKSMLNTAYHISAYYVLCTAEASSNLARFDGVRYGRRAEAQNLKELYIKSRTEGFGEEVKRRILLGSFVLSSGYYDAYYLKAQKVRHLIKNQYDEIFKDCDLVLSPVAPTVAPKFGSTSTPLEMYLGDIYTISINLAGLPALSLPVGKSEEGLPVGMQLIGKAFGEQSVLDGALSLERAIGFAL.

Active-site charge relay system residues include Lys51 and Ser126. Residues 103-128 (STTESSAHGKTLNPVDSSRVPGGSSG) form a disordered region. Low complexity predominate over residues 119–128 (SSRVPGGSSG). Ser150 serves as the catalytic Acyl-ester intermediate.

Belongs to the amidase family. GatA subfamily. Heterotrimer of A, B and C subunits.

It carries out the reaction L-glutamyl-tRNA(Gln) + L-glutamine + ATP + H2O = L-glutaminyl-tRNA(Gln) + L-glutamate + ADP + phosphate + H(+). Its function is as follows. Allows the formation of correctly charged Gln-tRNA(Gln) through the transamidation of misacylated Glu-tRNA(Gln) in organisms which lack glutaminyl-tRNA synthetase. The reaction takes place in the presence of glutamine and ATP through an activated gamma-phospho-Glu-tRNA(Gln). The sequence is that of Glutamyl-tRNA(Gln) amidotransferase subunit A from Wolinella succinogenes (strain ATCC 29543 / DSM 1740 / CCUG 13145 / JCM 31913 / LMG 7466 / NCTC 11488 / FDC 602W) (Vibrio succinogenes).